The sequence spans 413 residues: Probable cysteine desulfurase (413 aa).

At Lys-229 the chain carries N6-(pyridoxal phosphate)lysine. Residue Cys-368 is the Cysteine persulfide intermediate of the active site.

This sequence belongs to the class-V pyridoxal-phosphate-dependent aminotransferase family. Csd subfamily. The cofactor is pyridoxal 5'-phosphate.

The catalysed reaction is (sulfur carrier)-H + L-cysteine = (sulfur carrier)-SH + L-alanine. In terms of biological role, catalyzes the removal of elemental sulfur and selenium atoms from L-cysteine, L-cystine, L-selenocysteine, and L-selenocystine to produce L-alanine. The protein is Probable cysteine desulfurase (csd) of Staphylococcus aureus (strain Mu50 / ATCC 700699).